A 24-amino-acid polypeptide reads, in one-letter code: FLPAVLRVAAKVVPTVFCLISKKC.

An intrachain disulfide couples Cys-18 to Cys-24.

Expressed by the skin glands.

It localises to the secreted. In terms of biological role, has antibacterial activity against E.coli ATCC 25992 (MIC=49 uM), E.coli CIB 84492 (MIC=25 uM), S.aureus ATCC 25923 (MIC=6 uM) and S.aureus CIB 85462 (MIC=3 uM). The sequence is that of Brevinin-1JDc from Odorrana jingdongensis (Jingdong frog).